The following is a 109-amino-acid chain: Nucleoid-associated protein YbaB (109 aa).

It belongs to the YbaB/EbfC family. Homodimer.

It is found in the cytoplasm. The protein resides in the nucleoid. Functionally, binds to DNA and alters its conformation. May be involved in regulation of gene expression, nucleoid organization and DNA protection. In Escherichia coli O8 (strain IAI1), this protein is Nucleoid-associated protein YbaB.